Consider the following 356-residue polypeptide: Putative mitogen-activated protein kinase 14C (356 aa).

A Protein kinase domain is found at 20–305; it reads YEFVRFLGGG…AAEAMLHPYL (286 aa). ATP contacts are provided by residues 26–34 and Lys-49; that span reads LGGGSFGQV. Asp-147 serves as the catalytic Proton acceptor. Thr-177 bears the Phosphothreonine mark.

It belongs to the protein kinase superfamily. CMGC Ser/Thr protein kinase family. MAP kinase subfamily. Mg(2+) is required as a cofactor. In terms of processing, the phosphorylation on Thr-177 activates the enzyme. A conserved Tyr, which must also be phosphorylated to activate the enzyme in closely related sequences, is replaced by His-179 in this sequence.

It catalyses the reaction L-seryl-[protein] + ATP = O-phospho-L-seryl-[protein] + ADP + H(+). It carries out the reaction L-threonyl-[protein] + ATP = O-phospho-L-threonyl-[protein] + ADP + H(+). Its function is as follows. Kinase involved in a signal transduction pathway. This Drosophila melanogaster (Fruit fly) protein is Putative mitogen-activated protein kinase 14C (p38c).